The sequence spans 333 residues: Adenosine deaminase (333 aa).

His-12 and His-14 together coordinate Zn(2+). Substrate is bound by residues His-14, Asp-16, and Gly-170. His-197 is a Zn(2+) binding site. Residue Glu-200 is the Proton donor of the active site. Asp-278 serves as a coordination point for Zn(2+). Asp-279 provides a ligand contact to substrate.

Belongs to the metallo-dependent hydrolases superfamily. Adenosine and AMP deaminases family. Adenosine deaminase subfamily. The cofactor is Zn(2+).

It carries out the reaction adenosine + H2O + H(+) = inosine + NH4(+). The catalysed reaction is 2'-deoxyadenosine + H2O + H(+) = 2'-deoxyinosine + NH4(+). Its function is as follows. Catalyzes the hydrolytic deamination of adenosine and 2-deoxyadenosine. The polypeptide is Adenosine deaminase (Edwardsiella ictaluri (strain 93-146)).